Reading from the N-terminus, the 212-residue chain is Small ribosomal subunit protein uS19m (212 aa).

The transit peptide at 1-29 (MAFCTKLGGHWKQGVNVPVSSMLGSLRYM) directs the protein to the mitochondrion. Residues 31-109 (TKLYIGGLSP…FNISVNVAKD (79 aa)) form the RRM domain.

Belongs to the universal ribosomal protein uS19 family. As to quaternary structure, component of the mitochondrial ribosome small subunit.

The protein localises to the mitochondrion. Functionally, the RNA-binding domain found in RPS19 may functionally replace the missing mitochondrial RPS13. The protein is Small ribosomal subunit protein uS19m (RPS19) of Arabidopsis thaliana (Mouse-ear cress).